Consider the following 131-residue polypeptide: Phosphoribosyl-AMP cyclohydrolase (131 aa).

Residue Asp90 coordinates Mg(2+). Cys91 contacts Zn(2+). 2 residues coordinate Mg(2+): Asp92 and Asp94. The Zn(2+) site is built by Cys107 and Cys114.

Belongs to the PRA-CH family. In terms of assembly, homodimer. It depends on Mg(2+) as a cofactor. Zn(2+) serves as cofactor.

It localises to the cytoplasm. It carries out the reaction 1-(5-phospho-beta-D-ribosyl)-5'-AMP + H2O = 1-(5-phospho-beta-D-ribosyl)-5-[(5-phospho-beta-D-ribosylamino)methylideneamino]imidazole-4-carboxamide. It functions in the pathway amino-acid biosynthesis; L-histidine biosynthesis; L-histidine from 5-phospho-alpha-D-ribose 1-diphosphate: step 3/9. Its function is as follows. Catalyzes the hydrolysis of the adenine ring of phosphoribosyl-AMP. The chain is Phosphoribosyl-AMP cyclohydrolase from Hyphomonas neptunium (strain ATCC 15444).